The primary structure comprises 132 residues: Ribonuclease VapC15 (132 aa).

The region spanning 1-121 is the PINc domain; that stretch reads MIVDTSVWIA…HRDRDYEAIR (121 aa). Position 96 (aspartate 96) interacts with Mg(2+). Residues aspartate 96, aspartate 114, and aspartate 116 each contribute to the Mn(2+) site.

The protein belongs to the PINc/VapC protein family. As to quaternary structure, crystallizes as a VapB15-VapC15(2) heterotrimer and as a VapB15(2)-VapC15(2) heterotetramer; each toxin pair forms a homodimer which creates a channel in which the antitoxin binds. It depends on Mg(2+) as a cofactor. Mn(2+) serves as cofactor.

With respect to regulation, RNase activity inhibited by EDTA. Its function is as follows. Toxic component of a type II toxin-antitoxin (TA) system. Degrades total E.coli RNA, which is partially inhibited by cognate antitoxin VapB15. Upon expression in M.smegmatis inhibits colony formation, which is neutralized by coexpression with VapB15. This chain is Ribonuclease VapC15, found in Mycobacterium tuberculosis (strain ATCC 25618 / H37Rv).